Consider the following 101-residue polypeptide: Small ribosomal subunit protein bS18c (101 aa).

Residues Met-1–Leu-19 are compositionally biased toward basic residues. The interval Met-1–Gly-23 is disordered.

The protein belongs to the bacterial ribosomal protein bS18 family. In terms of assembly, part of the 30S ribosomal subunit.

Its subcellular location is the plastid. The protein localises to the chloroplast. This chain is Small ribosomal subunit protein bS18c, found in Acorus gramineus (Dwarf sweet flag).